The following is a 447-amino-acid chain: Cysteine--tRNA ligase (447 aa).

Position 28 (C28) interacts with Zn(2+). The 'HIGH' region motif lies at 30-40; the sequence is PTVYNYIHVGN. Zn(2+)-binding residues include C211, H236, and E240. The 'KMSKS' region signature appears at 268 to 272; that stretch reads KMSKS. Position 271 (K271) interacts with ATP.

This sequence belongs to the class-I aminoacyl-tRNA synthetase family. As to quaternary structure, monomer. The cofactor is Zn(2+).

The protein resides in the cytoplasm. It carries out the reaction tRNA(Cys) + L-cysteine + ATP = L-cysteinyl-tRNA(Cys) + AMP + diphosphate. This Streptococcus pneumoniae (strain ATCC BAA-255 / R6) protein is Cysteine--tRNA ligase.